A 156-amino-acid polypeptide reads, in one-letter code: Snaclec trimecetin subunit alpha (156 aa).

The N-terminal stretch at 1–23 is a signal peptide; the sequence is MGRFIFVSFGLLVVFLSLSGTGA. Disulfide bonds link C25/C36, C53/C150, and C125/C142. The C-type lectin domain maps to 32 to 151; it reads FRRYCYKPFK…CGERNLFMCK (120 aa).

This sequence belongs to the snaclec family. Heterodimer of subunits alpha and beta; disulfide-linked. Expressed by the venom gland.

The protein localises to the secreted. Its function is as follows. Snaclec that induces platelet aggregation in either human platelet rich plasma (PRP) or washed platelet suspensions. It causes aggregation in a dose-dependent manner even in the absence of various platelet agonists such as ADP or von Willebrand factor (vWF). Interestingly, it does not induce aggregation in rabbit PRP. A monoclonal antibody against the platelet GPIb receptor blocks the aggregation induced by trimecetin, suggesting that it acts by binding to GPIb (GP1BA/GP1BB). The polypeptide is Snaclec trimecetin subunit alpha (Protobothrops mucrosquamatus (Taiwan habu)).